We begin with the raw amino-acid sequence, 108 residues long: ATP synthase epsilon chain (108 aa).

Belongs to the ATPase epsilon chain family. F-type ATPases have 2 components, CF(1) - the catalytic core - and CF(0) - the membrane proton channel. CF(1) has five subunits: alpha(3), beta(3), gamma(1), delta(1), epsilon(1). CF(0) has three main subunits: a, b and c.

The protein resides in the cell inner membrane. Functionally, produces ATP from ADP in the presence of a proton gradient across the membrane. The polypeptide is ATP synthase epsilon chain (Thermotoga maritima (strain ATCC 43589 / DSM 3109 / JCM 10099 / NBRC 100826 / MSB8)).